The sequence spans 95 residues: MSSPVRTPPPERLEPNPGMSYAVMEIAIIAAVITAVALVLVCLLFLMLRYLYRHKGTYYTNEAKGTEFAESADAALQSDPALQDAGDTSKKEYFI.

The Extracellular portion of the chain corresponds to methionine 1–glutamate 25. The helical; Signal-anchor for type III membrane protein transmembrane segment at isoleucine 26–leucine 46 threads the bilayer. Residues methionine 47–isoleucine 95 lie on the Cytoplasmic side of the membrane. A phosphoserine mark is found at serine 71, serine 78, and serine 89.

The protein belongs to the glycophorin-C family.

Its subcellular location is the cell membrane. The protein is Glycophorin-C (Gypc) of Rattus norvegicus (Rat).